A 509-amino-acid polypeptide reads, in one-letter code: Aspartic proteinase oryzasin-1 (509 aa).

The signal sequence occupies residues M1–A24. A propeptide spans A25 to G67 (activation peptide). In terms of domain architecture, Peptidase A1 spans Y85–A506. The active site involves D103. C116 and C122 are joined by a disulfide. Residue N252 is glycosylated (N-linked (GlcNAc...) asparagine). An intrachain disulfide couples C281 to C285. Residue D290 is part of the active site. The Saposin B-type domain occupies V315 to P420. Disulfide bonds link C320–C414, C345–C386, C351–C383, and C428–C465. Residue N400 is glycosylated (N-linked (GlcNAc...) asparagine).

It belongs to the peptidase A1 family.

Its subcellular location is the vacuole. Functionally, involved in the breakdown of propeptides of storage proteins in protein-storage vacuoles. The chain is Aspartic proteinase oryzasin-1 from Oryza sativa subsp. japonica (Rice).